Here is a 446-residue protein sequence, read N- to C-terminus: Tubulin beta-2 chain (446 aa).

8 residues coordinate GTP: Q11, E69, S138, G142, T143, G144, N204, and N226. E69 contacts Mg(2+). The tract at residues Q424 to E446 is disordered. The segment covering T429–E446 has biased composition (acidic residues).

It belongs to the tubulin family. In terms of assembly, dimer of alpha and beta chains. A typical microtubule is a hollow water-filled tube with an outer diameter of 25 nm and an inner diameter of 15 nM. Alpha-beta heterodimers associate head-to-tail to form protofilaments running lengthwise along the microtubule wall with the beta-tubulin subunit facing the microtubule plus end conferring a structural polarity. Microtubules usually have 13 protofilaments but different protofilament numbers can be found in some organisms and specialized cells. Mg(2+) is required as a cofactor.

Its subcellular location is the cytoplasm. The protein resides in the cytoskeleton. In terms of biological role, tubulin is the major constituent of microtubules, a cylinder consisting of laterally associated linear protofilaments composed of alpha- and beta-tubulin heterodimers. Microtubules grow by the addition of GTP-tubulin dimers to the microtubule end, where a stabilizing cap forms. Below the cap, tubulin dimers are in GDP-bound state, owing to GTPase activity of alpha-tubulin. The polypeptide is Tubulin beta-2 chain (betaTub85D) (Drosophila erecta (Fruit fly)).